A 316-amino-acid polypeptide reads, in one-letter code: MSLRVVYLGTPQFAATVLKTLLDAHTHIVGVVTRADKPQKRSSKLISSPVKQLALSKNIPLLQPIKTTDPAFLAQLREWQADVFIVVAYGVILKQELLDIPTYGCYNLHAGLLPAYRGAAPIQRCIMDGGVLSGNTVIRMDAGMDTGDIANVNYVAIGEDMTAGGLAEALAASGGELLLKTLQEIEAGTVRHVPQNEAMATLAPKLTKEEGGIHWDAPASQVYAHIRGVSPAPGAWTRYLSQGKEARRLGVLSARMESFSGNYGDPGEVLGVSGEDLLIACRQGALRLRMVQPEGKASMKAKDFFNGQSRLVSKLF.

A (6S)-5,6,7,8-tetrahydrofolate-binding site is contributed by 111–114; it reads GLLP.

The protein belongs to the Fmt family.

It carries out the reaction L-methionyl-tRNA(fMet) + (6R)-10-formyltetrahydrofolate = N-formyl-L-methionyl-tRNA(fMet) + (6S)-5,6,7,8-tetrahydrofolate + H(+). Its function is as follows. Attaches a formyl group to the free amino group of methionyl-tRNA(fMet). The formyl group appears to play a dual role in the initiator identity of N-formylmethionyl-tRNA by promoting its recognition by IF2 and preventing the misappropriation of this tRNA by the elongation apparatus. The sequence is that of Methionyl-tRNA formyltransferase from Chlamydia trachomatis serovar L2b (strain UCH-1/proctitis).